A 423-amino-acid polypeptide reads, in one-letter code: Protein SOSEKI 5 (423 aa).

Residues 1–33 (MSSRVFRATPDNNYLVPRRSKDQQDTSPDRNRI) form a disordered region. Residues 19-33 (RSKDQQDTSPDRNRI) are compositionally biased toward basic and acidic residues. The interval 45-136 (RKVPVVYYLC…YVLKGSEVLD (92 aa)) is DIX-like oligomerization domain. Disordered regions lie at residues 150–172 (SSFR…PAVI) and 196–258 (SSAE…SPET). The segment covering 196-211 (SSAESTQRLAADASTQ) has biased composition (polar residues). 2 consecutive short sequence motifs (association to cell membranes) follow at residues 233–234 (AS) and 303–304 (CG). The tract at residues 379 to 423 (SSSYNADRCSRMGPTTEKDEEEAVRAKCIPRKPKPVAKRNNGGQQ) is disordered. The span at 406 to 415 (CIPRKPKPVA) shows a compositional bias: basic residues.

The protein belongs to the SOSEKI family. In terms of assembly, homodimer. Forms long polymer filaments with other SOKs proteins polymers (e.g. SOK1, SOK2, SOK3 and SOK4) crucial for polar localization and biological activity. Binds to ANGUSTIFOLIA (AN). In terms of tissue distribution, expressed during embryogenesis and in roots.

The protein resides in the cell membrane. Its function is as follows. SOSEKI proteins (SOK1-5) locally interpret global polarity cues and can influence cell division orientation to coordinate cell polarization relative to body axes. The chain is Protein SOSEKI 5 from Arabidopsis thaliana (Mouse-ear cress).